A 447-amino-acid chain; its full sequence is 3-O-methyltransferase 2 (447 aa).

Residues Gly264–Gly265, Asp287, Asp318–Phe319, and Arg334 contribute to the S-adenosyl-L-methionine site. The Proton acceptor role is filled by His338.

Belongs to the class I-like SAM-binding methyltransferase superfamily. Cation-independent O-methyltransferase family. COMT subfamily.

In terms of biological role, S-adenosyl-L-methionine-dependent methyltransferase that preferentially catalyzes the methylation of 3-OH phenolic compounds like isovanillic acid and 3-OH-4-Met cinnamic acid. May play a role in promoting lignin degradation by methylating and inactivating free-hydroxyl phenolic compounds, products of lignin cleavage which are known inhibitors of lignin peroxidases. The polypeptide is 3-O-methyltransferase 2 (Phanerochaete chrysosporium (strain RP-78 / ATCC MYA-4764 / FGSC 9002) (White-rot fungus)).